The chain runs to 214 residues: Thymidylate kinase (214 aa).

Gly-10–Ser-17 serves as a coordination point for ATP.

It belongs to the thymidylate kinase family.

The catalysed reaction is dTMP + ATP = dTDP + ADP. Functionally, phosphorylation of dTMP to form dTDP in both de novo and salvage pathways of dTTP synthesis. The chain is Thymidylate kinase from Brucella suis biovar 1 (strain 1330).